Reading from the N-terminus, the 150-residue chain is T-complex protein 1 subunit beta (150 aa).

D35 contacts Mg(2+). Positions 36, 37, 38, and 39 each coordinate ADP. Residues G36, T37, and T38 each contribute to the ATP site.

This sequence belongs to the TCP-1 chaperonin family. As to quaternary structure, component of the chaperonin-containing T-complex (TRiC), a hexadecamer composed of two identical back-to-back stacked rings enclosing a protein folding chamber. Each ring is made up of eight different subunits: TCP1/CCT1, CCT2, CCT3, CCT4, CCT5, CCT6A/CCT6, CCT7, CCT8. Interacts with PACRG. Interacts with FLCN. Interacts with DLEC1. Interacts with SVEP1.

The protein resides in the cytoplasm. The enzyme catalyses ATP + H2O = ADP + phosphate + H(+). Its function is as follows. Component of the chaperonin-containing T-complex (TRiC), a molecular chaperone complex that assists the folding of actin, tubulin and other proteins upon ATP hydrolysis. The TRiC complex mediates the folding of WRAP53/TCAB1, thereby regulating telomere maintenance. As part of the TRiC complex may play a role in the assembly of BBSome, a complex involved in ciliogenesis regulating transports vesicles to the cilia. The sequence is that of T-complex protein 1 subunit beta from Mesocricetus auratus (Golden hamster).